We begin with the raw amino-acid sequence, 229 residues long: Cytochrome c oxidase subunit 2 (229 aa).

The Mitochondrial intermembrane portion of the chain corresponds to 1 to 26; it reads MATWMNINLQDANSSTMEQLTMFHDH. A helical membrane pass occupies residues 27 to 48; that stretch reads TLMILTMITSIVTFIMVSMTTN. At 49-62 the chain is on the mitochondrial matrix side; sequence TLINRYLLEGQTIE. Residues 63–82 form a helical membrane-spanning segment; it reads FIWTTIPAITLIFIALPSLH. The Mitochondrial intermembrane segment spans residues 83-229; sequence LLYLIDEINN…LKWINKSLSS (147 aa). 6 residues coordinate Cu cation: H161, C196, E198, C200, H204, and M207. E198 is a binding site for Mg(2+).

This sequence belongs to the cytochrome c oxidase subunit 2 family. Component of the cytochrome c oxidase (complex IV, CIV), a multisubunit enzyme composed of a catalytic core of 3 subunits and several supernumerary subunits. The complex exists as a monomer or a dimer and forms supercomplexes (SCs) in the inner mitochondrial membrane with ubiquinol-cytochrome c oxidoreductase (cytochrome b-c1 complex, complex III, CIII). The cofactor is Cu cation.

It localises to the mitochondrion inner membrane. The enzyme catalyses 4 Fe(II)-[cytochrome c] + O2 + 8 H(+)(in) = 4 Fe(III)-[cytochrome c] + 2 H2O + 4 H(+)(out). Its function is as follows. Component of the cytochrome c oxidase, the last enzyme in the mitochondrial electron transport chain which drives oxidative phosphorylation. The respiratory chain contains 3 multisubunit complexes succinate dehydrogenase (complex II, CII), ubiquinol-cytochrome c oxidoreductase (cytochrome b-c1 complex, complex III, CIII) and cytochrome c oxidase (complex IV, CIV), that cooperate to transfer electrons derived from NADH and succinate to molecular oxygen, creating an electrochemical gradient over the inner membrane that drives transmembrane transport and the ATP synthase. Cytochrome c oxidase is the component of the respiratory chain that catalyzes the reduction of oxygen to water. Electrons originating from reduced cytochrome c in the intermembrane space (IMS) are transferred via the dinuclear copper A center (CU(A)) of subunit 2 and heme A of subunit 1 to the active site in subunit 1, a binuclear center (BNC) formed by heme A3 and copper B (CU(B)). The BNC reduces molecular oxygen to 2 water molecules using 4 electrons from cytochrome c in the IMS and 4 protons from the mitochondrial matrix. The sequence is that of Cytochrome c oxidase subunit 2 (COII) from Oncopeltus fasciatus (Large milkweed bug).